The chain runs to 428 residues: Probable protein phosphatase 2C 12 (428 aa).

Residues 24-293 form the PPM-type phosphatase domain; it reads KIDNPELIHG…DDTTCIVVDI (270 aa). Residues Asp-69, Gly-70, Asp-245, and Asp-284 each coordinate Mn(2+). The segment at 301-331 is disordered; the sequence is ASVPPPKKQGKGMLKSMFKRKTSDSSSNIEK.

The protein belongs to the PP2C family. Requires Mg(2+) as cofactor. Mn(2+) serves as cofactor.

It carries out the reaction O-phospho-L-seryl-[protein] + H2O = L-seryl-[protein] + phosphate. It catalyses the reaction O-phospho-L-threonyl-[protein] + H2O = L-threonyl-[protein] + phosphate. The chain is Probable protein phosphatase 2C 12 from Arabidopsis thaliana (Mouse-ear cress).